The primary structure comprises 372 residues: Glutamate 5-kinase (372 aa).

Lys-14 serves as a coordination point for ATP. Substrate contacts are provided by Ser-54, Asp-141, and Asn-153. 173–174 (TD) contributes to the ATP binding site. Residues 280–358 (RGRVVIDAGA…SEIESVLGHL (79 aa)) enclose the PUA domain.

Belongs to the glutamate 5-kinase family.

It localises to the cytoplasm. It carries out the reaction L-glutamate + ATP = L-glutamyl 5-phosphate + ADP. Its pathway is amino-acid biosynthesis; L-proline biosynthesis; L-glutamate 5-semialdehyde from L-glutamate: step 1/2. Catalyzes the transfer of a phosphate group to glutamate to form L-glutamate 5-phosphate. The protein is Glutamate 5-kinase of Cupriavidus pinatubonensis (strain JMP 134 / LMG 1197) (Cupriavidus necator (strain JMP 134)).